The chain runs to 37 residues: Cytochrome bd-I ubiquinol oxidase subunit X (37 aa).

A helical transmembrane segment spans residues 4–24; it reads FAWILGTLLACSFGVITALAL.

It belongs to the cytochrome ubiquinol oxidase subunit X family. As to quaternary structure, may be a subunit of cytochrome bd-I ubiquinol oxidase. Probably interacts with CydA and CydB.

It localises to the cell inner membrane. It carries out the reaction 2 a ubiquinol + O2(in) + 4 H(+)(in) = 2 a ubiquinone + 2 H2O(in) + 4 H(+)(out). It functions in the pathway energy metabolism; oxidative phosphorylation. Functionally, required for correct functioning of cytochrome bd-I oxidase. This protein and AppX may have some functional overlap. In Escherichia coli (strain K12), this protein is Cytochrome bd-I ubiquinol oxidase subunit X (cydX).